Consider the following 126-residue polypeptide: Histone H2B type F-S (126 aa).

Over residues M1–K12 the composition is skewed to low complexity. Positions M1 to E36 are disordered. Residue P2 is modified to N-acetylproline. Position 3 is an ADP-ribosyl glutamic acid (E3). At K6 the chain carries N6-(2-hydroxyisobutyryl)lysine; alternate. K6 carries the post-translational modification N6-(beta-hydroxybutyryl)lysine; alternate. Position 6 is an N6-acetyllysine; alternate (K6). K6 bears the N6-butyryllysine; alternate mark. Residue K6 is modified to N6-crotonyllysine; alternate. K6 is subject to N6-lactoyllysine; alternate. Residue K6 forms a Glycyl lysine isopeptide (Lys-Gly) (interchain with G-Cter in SUMO2); alternate linkage. ADP-ribosylserine is present on S7. The residue at position 12 (K12) is an N6-(beta-hydroxybutyryl)lysine; alternate. Residues K12 and K13 each carry the N6-acetyllysine; alternate modification. K12 and K13 each carry N6-crotonyllysine; alternate. The residue at position 12 (K12) is an N6-lactoyllysine; alternate. An N6-(2-hydroxyisobutyryl)lysine; alternate modification is found at K13. S15 is modified (phosphoserine; by STK4/MST1). An N6-acetyllysine; alternate mark is found at K16, K17, K21, and K24. An N6-crotonyllysine; alternate mark is found at K16, K17, K21, and K24. Residues K16, K17, K21, and K24 each carry the N6-lactoyllysine; alternate modification. K17 and K21 each carry N6-(beta-hydroxybutyryl)lysine; alternate. At K17 the chain carries N6-glutaryllysine; alternate. An N6-(2-hydroxyisobutyryl)lysine; alternate mark is found at K21 and K24. At K21 the chain carries N6-butyryllysine; alternate. Residue K21 forms a Glycyl lysine isopeptide (Lys-Gly) (interchain with G-Cter in SUMO2); alternate linkage. K25 carries the N6-(2-hydroxyisobutyryl)lysine modification. Residue K35 is modified to N6-(2-hydroxyisobutyryl)lysine; alternate. At K35 the chain carries N6-(beta-hydroxybutyryl)lysine; alternate. At K35 the chain carries N6-crotonyllysine; alternate. K35 bears the N6-glutaryllysine; alternate mark. K35 bears the N6-succinyllysine; alternate mark. Residue K35 forms a Glycyl lysine isopeptide (Lys-Gly) (interchain with G-Cter in ubiquitin); alternate linkage. E36 is modified (polyADP-ribosyl glutamic acid). S37 carries the phosphoserine; by AMPK modification. N6-(2-hydroxyisobutyryl)lysine; alternate occurs at positions 44, 47, and 58. K44 carries the post-translational modification N6-lactoyllysine; alternate. An N6-glutaryllysine; alternate mark is found at K44 and K47. At K47 the chain carries N6-methyllysine; alternate. K58 bears the N6,N6-dimethyllysine; alternate mark. R80 bears the Dimethylated arginine mark. K86 bears the N6-(2-hydroxyisobutyryl)lysine; alternate mark. K86 is subject to N6-(beta-hydroxybutyryl)lysine; alternate. The residue at position 86 (K86) is an N6-acetyllysine; alternate. Residue K86 is modified to N6-lactoyllysine; alternate. K86 is modified (N6,N6,N6-trimethyllysine; alternate). 2 positions are modified to omega-N-methylarginine: R87 and R93. K109 bears the N6-(2-hydroxyisobutyryl)lysine; alternate mark. K109 is modified (N6-lactoyllysine; alternate). N6-glutaryllysine; alternate is present on K109. K109 carries the N6-methyllysine; alternate modification. O-linked (GlcNAc) serine glycosylation is present at S113. Residue T116 is modified to Phosphothreonine. 2 positions are modified to N6-(2-hydroxyisobutyryl)lysine; alternate: K117 and K121. An N6-(beta-hydroxybutyryl)lysine; alternate mark is found at K117 and K121. K117 and K121 each carry N6-lactoyllysine; alternate. 2 positions are modified to N6-glutaryllysine; alternate: K117 and K121. N6-succinyllysine; alternate is present on residues K117 and K121. At K117 the chain carries N6-malonyllysine; alternate. At K117 the chain carries N6-methylated lysine; alternate. K121 participates in a covalent cross-link: Glycyl lysine isopeptide (Lys-Gly) (interchain with G-Cter in ubiquitin); alternate.

It belongs to the histone H2B family. In terms of assembly, the nucleosome is a histone octamer containing two molecules each of H2A, H2B, H3 and H4 assembled in one H3-H4 heterotetramer and two H2A-H2B heterodimers. The octamer wraps approximately 147 bp of DNA. Monoubiquitination at Lys-35 (H2BK34Ub) by the MSL1/MSL2 dimer is required for histone H3 'Lys-4' (H3K4me) and 'Lys-79' (H3K79me) methylation and transcription activation at specific gene loci, such as HOXA9 and MEIS1 loci. Similarly, monoubiquitination at Lys-121 (H2BK120Ub) by the RNF20/40 complex gives a specific tag for epigenetic transcriptional activation and is also prerequisite for histone H3 'Lys-4' and 'Lys-79' methylation. It also functions cooperatively with the FACT dimer to stimulate elongation by RNA polymerase II. H2BK120Ub also acts as a regulator of mRNA splicing: deubiquitination by USP49 is required for efficient cotranscriptional splicing of a large set of exons. In terms of processing, phosphorylation at Ser-37 (H2BS36ph) by AMPK in response to stress promotes transcription. Phosphorylated on Ser-15 (H2BS14ph) by STK4/MST1 during apoptosis; which facilitates apoptotic chromatin condensation. Also phosphorylated on Ser-15 in response to DNA double strand breaks (DSBs), and in correlation with somatic hypermutation and immunoglobulin class-switch recombination. Post-translationally, glcNAcylation at Ser-113 promotes monoubiquitination of Lys-121. It fluctuates in response to extracellular glucose, and associates with transcribed genes. ADP-ribosylated by PARP1 or PARP2 on Ser-7 (H2BS6ADPr) in response to DNA damage. H2BS6ADPr promotes recruitment of CHD1L. Mono-ADP-ribosylated on Glu-3 (H2BE2ADPr) by PARP3 in response to single-strand breaks. Poly ADP-ribosylation on Glu-36 (H2BE35ADPr) by PARP1 regulates adipogenesis: it inhibits phosphorylation at Ser-37 (H2BS36ph), thereby blocking expression of pro-adipogenetic genes. In terms of processing, crotonylation (Kcr) is specifically present in male germ cells and marks testis-specific genes in post-meiotic cells, including X-linked genes that escape sex chromosome inactivation in haploid cells. Crotonylation marks active promoters and enhancers and confers resistance to transcriptional repressors. It is also associated with post-meiotically activated genes on autosomes. Post-translationally, lactylated in macrophages by EP300/P300 by using lactoyl-CoA directly derived from endogenous or exogenous lactate, leading to stimulates gene transcription.

It localises to the nucleus. Its subcellular location is the chromosome. Its function is as follows. Core component of nucleosome. Nucleosomes wrap and compact DNA into chromatin, limiting DNA accessibility to the cellular machineries which require DNA as a template. Histones thereby play a central role in transcription regulation, DNA repair, DNA replication and chromosomal stability. DNA accessibility is regulated via a complex set of post-translational modifications of histones, also called histone code, and nucleosome remodeling. In terms of biological role, has broad antibacterial activity. May contribute to the formation of the functional antimicrobial barrier of the colonic epithelium, and to the bactericidal activity of amniotic fluid. This chain is Histone H2B type F-S, found in Homo sapiens (Human).